The primary structure comprises 204 residues: LexA repressor (204 aa).

Positions 31-51 form a DNA-binding region, H-T-H motif; sequence VREIGQAVGLKSSSTVHTHLV. Residues S128 and K165 each act as for autocatalytic cleavage activity in the active site.

Belongs to the peptidase S24 family. In terms of assembly, homodimer.

It carries out the reaction Hydrolysis of Ala-|-Gly bond in repressor LexA.. Functionally, represses a number of genes involved in the response to DNA damage (SOS response), including recA and lexA. In the presence of single-stranded DNA, RecA interacts with LexA causing an autocatalytic cleavage which disrupts the DNA-binding part of LexA, leading to derepression of the SOS regulon and eventually DNA repair. The chain is LexA repressor from Syntrophomonas wolfei subsp. wolfei (strain DSM 2245B / Goettingen).